The sequence spans 70 residues: UPF0352 protein PBPRA2586 (70 aa).

The protein belongs to the UPF0352 family.

This Photobacterium profundum (strain SS9) protein is UPF0352 protein PBPRA2586.